The chain runs to 206 residues: Testis-expressed protein 38 (206 aa).

A helical membrane pass occupies residues 15-35 (VSLYFGILGLCSVITGGCIIF).

It is found in the membrane. The sequence is that of Testis-expressed protein 38 (TEX38) from Homo sapiens (Human).